The primary structure comprises 313 residues: Homoserine O-succinyltransferase (313 aa).

The Acyl-thioester intermediate role is filled by C142. Substrate contacts are provided by K163 and S192. The active-site Proton acceptor is the H235. E237 is a catalytic residue. R249 lines the substrate pocket.

It belongs to the MetA family.

Its subcellular location is the cytoplasm. The enzyme catalyses L-homoserine + succinyl-CoA = O-succinyl-L-homoserine + CoA. It functions in the pathway amino-acid biosynthesis; L-methionine biosynthesis via de novo pathway; O-succinyl-L-homoserine from L-homoserine: step 1/1. Functionally, transfers a succinyl group from succinyl-CoA to L-homoserine, forming succinyl-L-homoserine. The chain is Homoserine O-succinyltransferase from Shewanella baltica (strain OS195).